Here is a 372-residue protein sequence, read N- to C-terminus: Aminomethyltransferase (372 aa).

The protein belongs to the GcvT family. The glycine cleavage system is composed of four proteins: P, T, L and H.

The catalysed reaction is N(6)-[(R)-S(8)-aminomethyldihydrolipoyl]-L-lysyl-[protein] + (6S)-5,6,7,8-tetrahydrofolate = N(6)-[(R)-dihydrolipoyl]-L-lysyl-[protein] + (6R)-5,10-methylene-5,6,7,8-tetrahydrofolate + NH4(+). In terms of biological role, the glycine cleavage system catalyzes the degradation of glycine. This is Aminomethyltransferase from Synechocystis sp. (strain ATCC 27184 / PCC 6803 / Kazusa).